The sequence spans 290 residues: Manganese efflux system protein MneS (290 aa).

The next 6 helical transmembrane spans lie at 15-35, 39-61, 82-102, 113-133, 159-179, and 181-201; these read LVSI…GYLF, ALTA…LIGL, IASL…LFSA, TPDM…LIVY, AFVS…LAWI, and TVTA…IFKE.

The protein belongs to the cation diffusion facilitator (CDF) transporter (TC 2.A.4) family.

It is found in the cell membrane. Secondary manganese efflux system. May prevent manganese intoxication. The polypeptide is Manganese efflux system protein MneS (Bacillus subtilis (strain 168)).